A 603-amino-acid polypeptide reads, in one-letter code: NADH-ubiquinone oxidoreductase chain 5 (603 aa).

16 helical membrane passes run phenylalanine 4–isoleucine 24, threonine 38–glycine 58, phenylalanine 89–alanine 109, leucine 122–isoleucine 142, alanine 171–leucine 191, leucine 211–leucine 233, threonine 241–isoleucine 261, isoleucine 273–leucine 293, isoleucine 301–asparagine 320, alanine 325–isoleucine 347, methionine 366–leucine 386, asparagine 405–threonine 424, leucine 457–leucine 477, leucine 488–alanine 508, isoleucine 537–tryptophan 557, and glycine 582–isoleucine 602.

It belongs to the complex I subunit 5 family. In terms of assembly, core subunit of respiratory chain NADH dehydrogenase (Complex I) which is composed of 45 different subunits.

It is found in the mitochondrion inner membrane. It catalyses the reaction a ubiquinone + NADH + 5 H(+)(in) = a ubiquinol + NAD(+) + 4 H(+)(out). Functionally, core subunit of the mitochondrial membrane respiratory chain NADH dehydrogenase (Complex I) which catalyzes electron transfer from NADH through the respiratory chain, using ubiquinone as an electron acceptor. Essential for the catalytic activity and assembly of complex I. The polypeptide is NADH-ubiquinone oxidoreductase chain 5 (MT-ND5) (Pongo pygmaeus (Bornean orangutan)).